The chain runs to 85 residues: Putative membrane protein insertion efficiency factor (85 aa).

Belongs to the UPF0161 family.

It is found in the cell inner membrane. Functionally, could be involved in insertion of integral membrane proteins into the membrane. The polypeptide is Putative membrane protein insertion efficiency factor (Shewanella woodyi (strain ATCC 51908 / MS32)).